A 116-amino-acid polypeptide reads, in one-letter code: T cell receptor alpha variable 14/delta variable 4 (116 aa).

A signal peptide spans 1–21 (MSLSSLLKVVTASLWLGPGIA). One can recognise an Ig-like domain in the interval 22 to 116 (QKITQTQPGM…SAMYFCAMRE (95 aa)). A disulfide bridge links C43 with C112. N78 carries N-linked (GlcNAc...) asparagine glycosylation.

In terms of assembly, alpha-beta TR is a heterodimer composed of an alpha and beta chain; disulfide-linked. The alpha-beta TR is associated with the transmembrane signaling CD3 coreceptor proteins to form the TR-CD3 (TcR or TCR). The assembly of alpha-beta TR heterodimers with CD3 occurs in the endoplasmic reticulum where a single alpha-beta TR heterodimer associates with one CD3D-CD3E heterodimer, one CD3G-CD3E heterodimer and one CD247 homodimer forming a stable octameric structure. CD3D-CD3E and CD3G-CD3E heterodimers preferentially associate with TR alpha and TR beta chains, respectively. The association of the CD247 homodimer is the last step of TcR assembly in the endoplasmic reticulum and is required for transport to the cell surface.

It is found in the cell membrane. V region of the variable domain of T cell receptor (TR) alpha chain that participates in the antigen recognition. Alpha-beta T cell receptors are antigen specific receptors which are essential to the immune response and are present on the cell surface of T lymphocytes. Recognize peptide-major histocompatibility (MH) (pMH) complexes that are displayed by antigen presenting cells (APC), a prerequisite for efficient T cell adaptive immunity against pathogens. Binding of alpha-beta TR to pMH complex initiates TR-CD3 clustering on the cell surface and intracellular activation of LCK that phosphorylates the ITAM motifs of CD3G, CD3D, CD3E and CD247 enabling the recruitment of ZAP70. In turn ZAP70 phosphorylates LAT, which recruits numerous signaling molecules to form the LAT signalosome. The LAT signalosome propagates signal branching to three major signaling pathways, the calcium, the mitogen-activated protein kinase (MAPK) kinase and the nuclear factor NF-kappa-B (NF-kB) pathways, leading to the mobilization of transcription factors that are critical for gene expression and essential for T cell growth and differentiation. The T cell repertoire is generated in the thymus, by V-(D)-J rearrangement. This repertoire is then shaped by intrathymic selection events to generate a peripheral T cell pool of self-MH restricted, non-autoaggressive T cells. Post-thymic interaction of alpha-beta TR with the pMH complexes shapes TR structural and functional avidity. The polypeptide is T cell receptor alpha variable 14/delta variable 4 (Homo sapiens (Human)).